A 322-amino-acid polypeptide reads, in one-letter code: Lipoyl synthase (322 aa).

Cysteine 69, cysteine 74, cysteine 80, cysteine 95, cysteine 99, cysteine 102, and serine 309 together coordinate [4Fe-4S] cluster. The Radical SAM core domain maps to 81–298; it reads FNHGTATFMI…GVKAKALGFD (218 aa).

The protein belongs to the radical SAM superfamily. Lipoyl synthase family. The cofactor is [4Fe-4S] cluster.

The protein resides in the cytoplasm. The enzyme catalyses [[Fe-S] cluster scaffold protein carrying a second [4Fe-4S](2+) cluster] + N(6)-octanoyl-L-lysyl-[protein] + 2 oxidized [2Fe-2S]-[ferredoxin] + 2 S-adenosyl-L-methionine + 4 H(+) = [[Fe-S] cluster scaffold protein] + N(6)-[(R)-dihydrolipoyl]-L-lysyl-[protein] + 4 Fe(3+) + 2 hydrogen sulfide + 2 5'-deoxyadenosine + 2 L-methionine + 2 reduced [2Fe-2S]-[ferredoxin]. It participates in protein modification; protein lipoylation via endogenous pathway; protein N(6)-(lipoyl)lysine from octanoyl-[acyl-carrier-protein]: step 2/2. Catalyzes the radical-mediated insertion of two sulfur atoms into the C-6 and C-8 positions of the octanoyl moiety bound to the lipoyl domains of lipoate-dependent enzymes, thereby converting the octanoylated domains into lipoylated derivatives. The polypeptide is Lipoyl synthase (Psychromonas ingrahamii (strain DSM 17664 / CCUG 51855 / 37)).